The primary structure comprises 233 residues: MAKLSKKAKAIAAAVDKNKLYTVAEAIALVREYATSKFDETIELAVNLGVDPRHADQMVRGVVTLPKGTGKNVRVGVFARGPKAEEAKAAGAEVVGAEDLMEAIQGGSIDFDRCIATPDMMGVVGRLGKILGPKGMMPNPKLGTVTMNVADAVKAAKGGQVEYRVDRTGIIHSGIGKASFSAEDIRANFDALIDALLKAKPAGAKGRYVKKVAISSTMGPGVSIDIADLPAAA.

It belongs to the universal ribosomal protein uL1 family. In terms of assembly, part of the 50S ribosomal subunit.

In terms of biological role, binds directly to 23S rRNA. The L1 stalk is quite mobile in the ribosome, and is involved in E site tRNA release. Protein L1 is also a translational repressor protein, it controls the translation of the L11 operon by binding to its mRNA. This Zymomonas mobilis subsp. mobilis (strain ATCC 31821 / ZM4 / CP4) protein is Large ribosomal subunit protein uL1.